The chain runs to 275 residues: MASSTAGLRPRRKKNPLSFIYSPKVIRPAVAIAVLLVVWQILCSGEGSNLPSPVQVLEQTYPLILNPFFDNGGTDKGLGIQIFASLTRVAVGFSAAAVVGIALGILIGSSKFMYDALDPIFQVLRTIPPLAWLPIALAALQEAEPSAIFVIFITAIWPIVINTTVGAQQVPQDYRNVSRVLKLSKSQYFFNILFPAAVPYIFTGLRIGIGLSWLAIVAAEMLIGGVGIGFFIWDAYNSSLISEIIIALIYVGIVGLLLDRFIAFLESLVVPAEQK.

7 helical membrane passes run 25–45 (VIRPAVAIAVLLVVWQILCSG), 89–109 (VAVGFSAAAVVGIALGILIGS), 120–140 (IFQVLRTIPPLAWLPIALAAL), 147–167 (AIFVIFITAIWPIVINTTVGA), 189–209 (FFNILFPAAVPYIFTGLRIGI), 213–233 (WLAIVAAEMLIGGVGIGFFIW), and 238–258 (SSLISEIIIALIYVGIVGLLL). Positions 82–262 (IFASLTRVAV…IVGLLLDRFI (181 aa)) constitute an ABC transmembrane type-1 domain.

The protein belongs to the binding-protein-dependent transport system permease family. CysTW subfamily. In terms of assembly, the complex is composed of two ATP-binding proteins (NrtC and NrtD), two transmembrane proteins (NrtB) and a solute-binding protein (NrtA).

Its subcellular location is the cell inner membrane. Its function is as follows. Part of the ABC transporter complex NrtABCD involved in nitrate uptake. The complex is probably also involved in nitrite transport. Probably responsible for the translocation of the substrate across the membrane. This is Nitrate import permease protein NrtB (nrtB) from Synechocystis sp. (strain ATCC 27184 / PCC 6803 / Kazusa).